The following is a 189-amino-acid chain: Penicillin-binding protein activator LpoB (189 aa).

Residues 1–16 (MRRILFVALSVMFLAG) form the signal peptide. Residue C17 is the site of N-palmitoyl cysteine attachment. A lipid anchor (S-diacylglycerol cysteine) is attached at C17. A disordered region spans residues 18–52 (PSLPPEQPEPPTPVVPVTPSEKPTPPSEKVPEPPK). Over residues 19-45 (SLPPEQPEPPTPVVPVTPSEKPTPPSE) the composition is skewed to pro residues.

Belongs to the LpoB family. Interacts with PBP1b.

The protein resides in the cell outer membrane. Its function is as follows. Regulator of peptidoglycan synthesis that is essential for the function of penicillin-binding protein 1B (PBP1b). The polypeptide is Penicillin-binding protein activator LpoB (Photorhabdus laumondii subsp. laumondii (strain DSM 15139 / CIP 105565 / TT01) (Photorhabdus luminescens subsp. laumondii)).